A 475-amino-acid chain; its full sequence is Ribulose bisphosphate carboxylase large chain (475 aa).

A propeptide spanning residues 1 to 2 (MS) is cleaved from the precursor. P3 bears the N-acetylproline mark. Position 14 is an N6,N6,N6-trimethyllysine (K14). Residues N123 and T173 each coordinate substrate. The active-site Proton acceptor is K175. Residue K177 participates in substrate binding. Mg(2+)-binding residues include K201, D203, and E204. At K201 the chain carries N6-carboxylysine. H294 acts as the Proton acceptor in catalysis. R295, H327, and S379 together coordinate substrate.

Belongs to the RuBisCO large chain family. Type I subfamily. Heterohexadecamer of 8 large chains and 8 small chains; disulfide-linked. The disulfide link is formed within the large subunit homodimers. The cofactor is Mg(2+). The disulfide bond which can form in the large chain dimeric partners within the hexadecamer appears to be associated with oxidative stress and protein turnover.

It is found in the plastid. It localises to the chloroplast. The catalysed reaction is 2 (2R)-3-phosphoglycerate + 2 H(+) = D-ribulose 1,5-bisphosphate + CO2 + H2O. It carries out the reaction D-ribulose 1,5-bisphosphate + O2 = 2-phosphoglycolate + (2R)-3-phosphoglycerate + 2 H(+). Functionally, ruBisCO catalyzes two reactions: the carboxylation of D-ribulose 1,5-bisphosphate, the primary event in carbon dioxide fixation, as well as the oxidative fragmentation of the pentose substrate in the photorespiration process. Both reactions occur simultaneously and in competition at the same active site. The sequence is that of Ribulose bisphosphate carboxylase large chain from Chara vulgaris (Common stonewort).